The chain runs to 393 residues: DNA-directed RNA polymerase subunit Rpo1C (393 aa).

Belongs to the RNA polymerase beta' chain family. In terms of assembly, part of the RNA polymerase complex.

Its subcellular location is the cytoplasm. The enzyme catalyses RNA(n) + a ribonucleoside 5'-triphosphate = RNA(n+1) + diphosphate. Functionally, DNA-dependent RNA polymerase (RNAP) catalyzes the transcription of DNA into RNA using the four ribonucleoside triphosphates as substrates. Forms part of the jaw domain. The protein is DNA-directed RNA polymerase subunit Rpo1C of Halococcus morrhuae (Micrococcus morrhuae).